We begin with the raw amino-acid sequence, 426 residues long: Tyrosine--tRNA ligase (426 aa).

Tyrosine 37 contacts L-tyrosine. Positions 42 to 51 (PTADSLHLGH) match the 'HIGH' region motif. L-tyrosine is bound by residues tyrosine 175 and glutamine 179. A 'KMSKS' region motif is present at residues 235-239 (KFGKT). Lysine 238 lines the ATP pocket. One can recognise an S4 RNA-binding domain in the interval 357–415 (TDLMQALVESELQPSRGQARKAIAANGVTVNGIKQPDPDYVLNENDRYFSNYTLLRRGK).

Belongs to the class-I aminoacyl-tRNA synthetase family. TyrS type 1 subfamily. As to quaternary structure, homodimer.

The protein localises to the cytoplasm. It carries out the reaction tRNA(Tyr) + L-tyrosine + ATP = L-tyrosyl-tRNA(Tyr) + AMP + diphosphate + H(+). In terms of biological role, catalyzes the attachment of tyrosine to tRNA(Tyr) in a two-step reaction: tyrosine is first activated by ATP to form Tyr-AMP and then transferred to the acceptor end of tRNA(Tyr). In Klebsiella pneumoniae (strain 342), this protein is Tyrosine--tRNA ligase.